Consider the following 550-residue polypeptide: Rhodopsin kinase grk7-b (550 aa).

The disordered stretch occupies residues serine 22 to serine 45. Serine 36 bears the Phosphoserine mark. The region spanning tyrosine 57 to leucine 174 is the RGS domain. The 263-residue stretch at phenylalanine 189–phenylalanine 451 folds into the Protein kinase domain. ATP-binding positions include leucine 195–valine 203 and lysine 218. Aspartate 314 functions as the Proton acceptor in the catalytic mechanism. The region spanning lysine 452–glutamate 517 is the AGC-kinase C-terminal domain. Serine 487 carries the phosphoserine modification. The tract at residues serine 531–leucine 550 is disordered. Position 547 is a cysteine methyl ester (cysteine 547). Cysteine 547 carries S-geranylgeranyl cysteine lipidation. The propeptide at serine 548–leucine 550 is removed in mature form.

This sequence belongs to the protein kinase superfamily. AGC Ser/Thr protein kinase family. GPRK subfamily. In terms of processing, autophosphorylated in vitro at Ser-487. Phosphorylation at Ser-36 is regulated by light and activated by cAMP. Retina, cones.

The protein resides in the membrane. It catalyses the reaction L-threonyl-[rhodopsin] + ATP = O-phospho-L-threonyl-[rhodopsin] + ADP + H(+). The enzyme catalyses L-seryl-[rhodopsin] + ATP = O-phospho-L-seryl-[rhodopsin] + ADP + H(+). Its function is as follows. Retina-specific kinase involved in the shutoff of the photoresponse and adaptation to changing light conditions via cone opsin phosphorylation, including rhodopsin (RHO). This chain is Rhodopsin kinase grk7-b (grk7-b), found in Xenopus laevis (African clawed frog).